The chain runs to 1527 residues: Peroxidasin (1527 aa).

A signal peptide spans 1–23 (MRFMLLMLQLLGLLLLLAGGVQS). Residues 24–53 (VYCPAGCTCLERTVRCIRAKLSAVPKLPQD) form the LRRNT domain. 6 LRR repeats span residues 51–74 (PQDTQTLDLRFNHIEELPANAFSG), 75–98 (LAQLTTLFLNDNELAYLQDGALNG), 99–122 (LTALRFVYLNNNRLSRLPATIFQR), 124–146 (PRLEAIFLENNDIWQLPAGLFDN), 147–170 (LPRLNRLIMYNNKLTQLPVDGFNR), and 172–196 (NNLKRLRLDGNAIDCNCGVYSLWRR). Ig-like C2-type domains follow at residues 236-322 (PQFL…QPVR), 365-453 (PHFT…ARIE), 458-545 (PEIL…ATIK), and 553-643 (PQLA…ALVT). 4 cysteine pairs are disulfide-bonded: Cys257-Cys307, Cys388-Cys437, Cys479-Cys529, and Cys574-Cys627. Residue Asn419 is glycosylated (N-linked (GlcNAc...) asparagine). 5 N-linked (GlcNAc...) asparagine glycosylation sites follow: Asn616, Asn673, Asn682, Asn731, and Asn767. A disulfide bond links Cys768 and Cys784. Asp862 provides a ligand contact to heme b. Catalysis depends on His863, which acts as the Proton acceptor. Residue Asp864 coordinates Ca(2+). Cystine bridges form between Cys882/Cys892 and Cys886/Cys909. Residues Thr941, Tyr943, Asp945, and Ser947 each contribute to the Ca(2+) site. An N-linked (GlcNAc...) asparagine glycan is attached at Asn962. Cys994 and Cys1005 are disulfide-bonded. Heme b is bound by residues Glu1015 and His1109. 2 N-linked (GlcNAc...) asparagine glycosylation sites follow: Asn1120 and Asn1213. Intrachain disulfides connect Cys1212–Cys1269 and Cys1310–Cys1336. The stretch at 1403-1441 (NEERVSGLEELIGSFQKELKKLHKKLRKLEDSCNSADSE) forms a coiled coil. A VWFC domain is found at 1463-1524 (SHCVDDKGTT…PPEACCPHCP (62 aa)).

This sequence belongs to the peroxidase family. XPO subfamily. As to quaternary structure, homotrimer; disulfide-linked. Ca(2+) is required as a cofactor. Requires heme b as cofactor. In terms of tissue distribution, expressed in hemocytes. Also expressed in the fat body and gastric caeca.

It is found in the secreted. It carries out the reaction (5R)-5-hydroxy-L-lysyl-[collagen] + L-methionyl-[collagen] + H2O2 = [collagen]-(5R)-5-hydroxy-L-lysyl-N-S-L-methionyl-[collagen] + 2 H2O + H(+). The catalysed reaction is bromide + H2O2 = hypobromite + H2O. The enzyme catalyses (5R)-5-hydroxy-L-lysyl-[collagen] + L-methionyl-[collagen] + hypobromite = [collagen]-(5R)-5-hydroxy-L-lysyl-N-S-L-methionyl-[collagen] + bromide + H2O + H(+). It catalyses the reaction L-lysyl-[collagen] + L-methionyl-[collagen] + H2O2 = [collagen]-L-lysyl-N-S-L-methionyl-[collagen] + 2 H2O + H(+). It carries out the reaction L-lysyl-[collagen] + L-methionyl-[collagen] + hypobromite = [collagen]-L-lysyl-N-S-L-methionyl-[collagen] + bromide + H2O + H(+). The catalysed reaction is L-tyrosyl-[protein] + bromide + H2O2 + H(+) = 3-bromo-L-tyrosyl-[protein] + 2 H2O. The enzyme catalyses hypobromite + L-tyrosyl-[protein] + H(+) = 3-bromo-L-tyrosyl-[protein] + H2O. Catalyzes the two-electron oxidation of bromide by hydrogen peroxide and generates hypobromite as a reactive intermediate which mediates the formation of sulfilimine cross-links between methionine and hydroxylysine residues within an uncross-linked collagen IV NC1 hexamer. Plays a role in extracellular matrix consolidation, phagocytosis and defense. The polypeptide is Peroxidasin (Drosophila melanogaster (Fruit fly)).